The primary structure comprises 434 residues: Enolase (434 aa).

Gln165 is a (2R)-2-phosphoglycerate binding site. The active-site Proton donor is Glu207. Residues Asp244, Glu291, and Asp318 each contribute to the Mg(2+) site. (2R)-2-phosphoglycerate contacts are provided by Lys343, Arg372, Ser373, and Lys394. Lys343 (proton acceptor) is an active-site residue.

This sequence belongs to the enolase family. It depends on Mg(2+) as a cofactor.

Its subcellular location is the cytoplasm. It localises to the secreted. The protein localises to the cell surface. It carries out the reaction (2R)-2-phosphoglycerate = phosphoenolpyruvate + H2O. Its pathway is carbohydrate degradation; glycolysis; pyruvate from D-glyceraldehyde 3-phosphate: step 4/5. Its function is as follows. Catalyzes the reversible conversion of 2-phosphoglycerate (2-PG) into phosphoenolpyruvate (PEP). It is essential for the degradation of carbohydrates via glycolysis. This chain is Enolase, found in Macrococcus caseolyticus (strain JCSC5402) (Macrococcoides caseolyticum).